The chain runs to 365 residues: tRNA/tmRNA (uracil-C(5))-methyltransferase (365 aa).

S-adenosyl-L-methionine-binding residues include Gln-189, Tyr-217, Asn-222, Glu-238, and Asp-298. Cys-323 acts as the Nucleophile in catalysis. The active-site Proton acceptor is Glu-357.

The protein belongs to the class I-like SAM-binding methyltransferase superfamily. RNA M5U methyltransferase family. TrmA subfamily.

The enzyme catalyses uridine(54) in tRNA + S-adenosyl-L-methionine = 5-methyluridine(54) in tRNA + S-adenosyl-L-homocysteine + H(+). It carries out the reaction uridine(341) in tmRNA + S-adenosyl-L-methionine = 5-methyluridine(341) in tmRNA + S-adenosyl-L-homocysteine + H(+). In terms of biological role, dual-specificity methyltransferase that catalyzes the formation of 5-methyluridine at position 54 (m5U54) in all tRNAs, and that of position 341 (m5U341) in tmRNA (transfer-mRNA). This chain is tRNA/tmRNA (uracil-C(5))-methyltransferase, found in Shewanella piezotolerans (strain WP3 / JCM 13877).